The following is a 245-amino-acid chain: tRNA1(Val) (adenine(37)-N6)-methyltransferase (245 aa).

This sequence belongs to the methyltransferase superfamily. tRNA (adenine-N(6)-)-methyltransferase family.

The protein localises to the cytoplasm. The enzyme catalyses adenosine(37) in tRNA1(Val) + S-adenosyl-L-methionine = N(6)-methyladenosine(37) in tRNA1(Val) + S-adenosyl-L-homocysteine + H(+). Functionally, specifically methylates the adenine in position 37 of tRNA(1)(Val) (anticodon cmo5UAC). In Klebsiella pneumoniae (strain 342), this protein is tRNA1(Val) (adenine(37)-N6)-methyltransferase.